We begin with the raw amino-acid sequence, 292 residues long: Troponin I (292 aa).

N-acetylserine is present on Ser1. Positions 1 to 149 are disordered; it reads SSLEERRAAR…GLGGLSPEKK (149 aa). Positions 46-55 are enriched in low complexity; it reads YSAPAEPAYD. A compositionally biased stretch (basic and acidic residues) spans 58–134; that stretch reads AENRRRQQQE…EARRMAEEQK (77 aa). Residues 237 to 250 form an actin-binding region; that stretch reads DTKGKFVKPVLRKV. The interval 255–292 is disordered; sequence SKLDKIQRKEAKKSDFRDNLKSSREHEADKEGGEGENE.

Belongs to the troponin I family.

Troponin I is the inhibitory subunit of troponin, the thin filament regulatory complex which confers calcium-sensitivity to striated muscle actomyosin ATPase activity. In Chlamys nipponensis akazara (Akazara scallop), this protein is Troponin I.